Here is a 337-residue protein sequence, read N- to C-terminus: 4-hydroxythreonine-4-phosphate dehydrogenase (337 aa).

Substrate contacts are provided by His138 and Thr139. Residues His168, His212, and His267 each contribute to the a divalent metal cation site. The substrate site is built by Lys275, Asn284, and Arg293.

It belongs to the PdxA family. In terms of assembly, homodimer. Zn(2+) is required as a cofactor. The cofactor is Mg(2+). Requires Co(2+) as cofactor.

It is found in the cytoplasm. The catalysed reaction is 4-(phosphooxy)-L-threonine + NAD(+) = 3-amino-2-oxopropyl phosphate + CO2 + NADH. Its pathway is cofactor biosynthesis; pyridoxine 5'-phosphate biosynthesis; pyridoxine 5'-phosphate from D-erythrose 4-phosphate: step 4/5. Functionally, catalyzes the NAD(P)-dependent oxidation of 4-(phosphooxy)-L-threonine (HTP) into 2-amino-3-oxo-4-(phosphooxy)butyric acid which spontaneously decarboxylates to form 3-amino-2-oxopropyl phosphate (AHAP). In Beijerinckia indica subsp. indica (strain ATCC 9039 / DSM 1715 / NCIMB 8712), this protein is 4-hydroxythreonine-4-phosphate dehydrogenase.